Here is a 321-residue protein sequence, read N- to C-terminus: Methionine import ATP-binding protein MetN (321 aa).

In terms of domain architecture, ABC transporter spans isoleucine 2–glycine 237. Residue glycine 34 to serine 41 participates in ATP binding.

This sequence belongs to the ABC transporter superfamily. Methionine importer (TC 3.A.1.24) family. As to quaternary structure, the complex is composed of two ATP-binding proteins (MetN), two transmembrane proteins (MetI) and a solute-binding protein (MetQ).

The protein resides in the cell membrane. The catalysed reaction is L-methionine(out) + ATP + H2O = L-methionine(in) + ADP + phosphate + H(+). It catalyses the reaction D-methionine(out) + ATP + H2O = D-methionine(in) + ADP + phosphate + H(+). Functionally, part of the ABC transporter complex MetNIQ involved in methionine import. Responsible for energy coupling to the transport system. This is Methionine import ATP-binding protein MetN from Clostridioides difficile (strain 630) (Peptoclostridium difficile).